Reading from the N-terminus, the 155-residue chain is uncharacterized protein (155 aa).

This is an uncharacterized protein from Agrobacterium vitis (Rhizobium vitis).